Reading from the N-terminus, the 312-residue chain is Aspartoacylase (312 aa).

His-20 and Glu-23 together coordinate Zn(2+). N-acetyl-L-aspartate contacts are provided by Arg-62, Asn-69, and Arg-70. A Zn(2+)-binding site is contributed by His-115. Residues Tyr-163 and Arg-167 each coordinate N-acetyl-L-aspartate. Residue Glu-177 is the Proton donor/acceptor of the active site. Tyr-287 serves as a coordination point for N-acetyl-L-aspartate.

Belongs to the AspA/AstE family. Aspartoacylase subfamily. Homodimer. It depends on Zn(2+) as a cofactor.

The protein localises to the cytoplasm. It localises to the nucleus. The catalysed reaction is an N-acyl-L-aspartate + H2O = a carboxylate + L-aspartate. It carries out the reaction N-acetyl-L-aspartate + H2O = L-aspartate + acetate. Functionally, catalyzes the deacetylation of N-acetylaspartic acid (NAA) to produce acetate and L-aspartate. NAA occurs in high concentration in brain and its hydrolysis NAA plays a significant part in the maintenance of intact white matter. In other tissues it acts as a scavenger of NAA from body fluids. The sequence is that of Aspartoacylase from Mus musculus (Mouse).